The following is a 384-amino-acid chain: uncharacterized protein (384 aa).

This is an uncharacterized protein from Nostoc sp. (strain PCC 7120 / SAG 25.82 / UTEX 2576).